The primary structure comprises 336 residues: Probable allantoicase (336 aa).

The protein belongs to the allantoicase family.

It catalyses the reaction allantoate + H2O = (S)-ureidoglycolate + urea. It participates in nitrogen metabolism; (S)-allantoin degradation; (S)-ureidoglycolate from allantoate (aminidohydrolase route): step 1/1. This Acinetobacter baumannii (strain SDF) protein is Probable allantoicase.